A 330-amino-acid polypeptide reads, in one-letter code: Olfactory receptor 5T9 (330 aa).

Over 1-37 (MSIHSPGYTVRRIPVNNVTDTTMFILTGFTDDADLQV) the chain is Extracellular. N-linked (GlcNAc...) asparagine glycosylation is present at Asn17. A helical transmembrane segment spans residues 38–58 (LLFLLFFVIYLFTLIGNLGLV). The Cytoplasmic segment spans residues 59–66 (LLVIGDSR). Residues 67-87 (LHNPMYYFLSVLSFLDACYST) traverse the membrane as a helical segment. Topologically, residues 88–111 (VVTPKMLVNFISNDKSISYPGCVT) are extracellular. Residues Cys109 and Cys201 are joined by a disulfide bond. A helical membrane pass occupies residues 112-132 (EMFLFVTFGTTECFLLAAMAY). The Cytoplasmic segment spans residues 133–145 (DRFVAIYNPLLYA). The helical transmembrane segment at 146–166 (VKMSPRVYIPLIIACYSGGIM) threads the bilayer. Over 167 to 208 (HATIHTVATFSLSFCASNEIRHVFCDIPPLLAISCSNTNINQ) the chain is Extracellular. A helical transmembrane segment spans residues 209-229 (LLLFYCVGSIEIITILIVLVS). The Cytoplasmic portion of the chain corresponds to 230–249 (YSFILFAILKMNSAEGRRKI). A helical membrane pass occupies residues 250–270 (FSTCGSHLTGVSIYHGTILFM). At 271–283 (YVRPSSNYALEHD) the chain is on the extracellular side. Residues 284–304 (MIVSTFYTIVIPMLNPIIYSL) traverse the membrane as a helical segment. The Cytoplasmic segment spans residues 305-330 (RNKDVKEAMKKIFERNFFMNKVHFKL).

The protein belongs to the G-protein coupled receptor 1 family.

The protein resides in the cell membrane. Its function is as follows. Potential odorant receptor. The polypeptide is Olfactory receptor 5T9 (Mus musculus (Mouse)).